The primary structure comprises 303 residues: 1D-myo-inositol 2-acetamido-2-deoxy-alpha-D-glucopyranoside deacetylase 1 (303 aa).

Zn(2+)-binding residues include histidine 15, aspartate 18, and histidine 157.

This sequence belongs to the MshB deacetylase family. Zn(2+) serves as cofactor.

The enzyme catalyses 1D-myo-inositol 2-acetamido-2-deoxy-alpha-D-glucopyranoside + H2O = 1D-myo-inositol 2-amino-2-deoxy-alpha-D-glucopyranoside + acetate. Catalyzes the deacetylation of 1D-myo-inositol 2-acetamido-2-deoxy-alpha-D-glucopyranoside (GlcNAc-Ins) in the mycothiol biosynthesis pathway. This is 1D-myo-inositol 2-acetamido-2-deoxy-alpha-D-glucopyranoside deacetylase 1 from Saccharopolyspora erythraea (strain ATCC 11635 / DSM 40517 / JCM 4748 / NBRC 13426 / NCIMB 8594 / NRRL 2338).